The chain runs to 518 residues: Type II methyltransferase M.HindII (518 aa).

It belongs to the N(4)/N(6)-methyltransferase family.

The catalysed reaction is a 2'-deoxyadenosine in DNA + S-adenosyl-L-methionine = an N(6)-methyl-2'-deoxyadenosine in DNA + S-adenosyl-L-homocysteine + H(+). Functionally, a gamma subtype methylase, recognizes the double-stranded sequence 5'-GTYRAC-3', methylates A-5 on both strands, and protects the DNA from cleavage by the HindII endonuclease. The protein is Type II methyltransferase M.HindII (hindIIM) of Haemophilus influenzae (strain ATCC 51907 / DSM 11121 / KW20 / Rd).